The chain runs to 149 residues: Large ribosomal subunit protein bL9 (149 aa).

It belongs to the bacterial ribosomal protein bL9 family.

Functionally, binds to the 23S rRNA. The protein is Large ribosomal subunit protein bL9 of Helicobacter pylori (strain ATCC 700392 / 26695) (Campylobacter pylori).